Here is a 1749-residue protein sequence, read N- to C-terminus: Transposon Ty1-NL2 Gag-Pol polyprotein (1749 aa).

4 stretches are compositionally biased toward polar residues: residues 1 to 23 (MESQ…SVTS), 48 to 60 (TKAN…TPAS), 71 to 97 (SPQT…NQAN), and 129 to 152 (QFPQ…GNTF). Disordered regions lie at residues 1–97 (MESQ…NQAN), 129–171 (QFPQ…YVRP), and 352–421 (GSRN…SKST). The span at 153-165 (TDSSSADSDMTST) shows a compositional bias: low complexity. The interval 299-401 (NNGIHINNKV…NSKSKTARAH (103 aa)) is RNA-binding. Over residues 402-418 (NVSTSNNSPSTDNDSIS) the composition is skewed to low complexity. D461 acts as the For protease activity; shared with dimeric partner in catalysis. Positions 583 to 640 (NVHTSESTRKYPYPFIHRMLAHANAQTIRYSLKNNTITYFNESDVDWSSAIDYQCPDC) are integrase-type zinc finger-like. The region spanning 660-835 (NSYEPFQYLH…AGLDISTLLP (176 aa)) is the Integrase catalytic domain. Mg(2+) contacts are provided by D671 and D736. Positions 945–1166 (PRNVLSKAVS…LGGIGDSNAY (222 aa)) are disordered. Positions 954–963 (SPTDSTPPST) are enriched in low complexity. Residues 999–1009 (STPQISDIEST) show a composition bias toward polar residues. A compositionally biased stretch (basic and acidic residues) spans 1032 to 1047 (ESSHTSKSKDFRHSDS). Polar residues-rich tracts occupy residues 1048 to 1076 (YSDN…QTSE) and 1089 to 1100 (SIDTSSSESNSL). The short motif at 1172 to 1206 (KKRSLEDNETEIKVSRDTWNTKNMRSLEPPRSKKR) is the Bipartite nuclear localization signal element. The Reverse transcriptase Ty1/copia-type domain occupies 1332–1470 (NNYYITQLDI…DILGLEIKYQ (139 aa)). Mg(2+) is bound by residues D1340, D1421, D1422, D1604, E1646, and D1679. An RNase H Ty1/copia-type domain is found at 1604-1746 (DASYGNQPYY…IKTFKLLTNK (143 aa)).

The capsid protein forms a homotrimer, from which the VLPs are assembled. The protease is a homodimer, whose active site consists of two apposed aspartic acid residues. Post-translationally, initially, virus-like particles (VLPs) are composed of the structural unprocessed proteins Gag and Gag-Pol, and also contain the host initiator methionine tRNA (tRNA(i)-Met) which serves as a primer for minus-strand DNA synthesis, and a dimer of genomic Ty RNA. Processing of the polyproteins occurs within the particle and proceeds by an ordered pathway, called maturation. First, the protease (PR) is released by autocatalytic cleavage of the Gag-Pol polyprotein yielding capsid protein p45 and a Pol-p154 precursor protein. This cleavage is a prerequisite for subsequent processing of Pol-p154 at the remaining sites to release the mature structural and catalytic proteins. Maturation takes place prior to the RT reaction and is required to produce transposition-competent VLPs.

It is found in the cytoplasm. It localises to the nucleus. The catalysed reaction is DNA(n) + a 2'-deoxyribonucleoside 5'-triphosphate = DNA(n+1) + diphosphate. The enzyme catalyses Endonucleolytic cleavage to 5'-phosphomonoester.. Capsid protein (CA) is the structural component of the virus-like particle (VLP), forming the shell that encapsulates the retrotransposons dimeric RNA genome. The particles are assembled from trimer-clustered units and there are holes in the capsid shells that allow for the diffusion of macromolecules. CA also has nucleocapsid-like chaperone activity, promoting primer tRNA(i)-Met annealing to the multipartite primer-binding site (PBS), dimerization of Ty1 RNA and initiation of reverse transcription. Functionally, the aspartyl protease (PR) mediates the proteolytic cleavages of the Gag and Gag-Pol polyproteins after assembly of the VLP. In terms of biological role, reverse transcriptase/ribonuclease H (RT) is a multifunctional enzyme that catalyzes the conversion of the retro-elements RNA genome into dsDNA within the VLP. The enzyme displays a DNA polymerase activity that can copy either DNA or RNA templates, and a ribonuclease H (RNase H) activity that cleaves the RNA strand of RNA-DNA heteroduplexes during plus-strand synthesis and hydrolyzes RNA primers. The conversion leads to a linear dsDNA copy of the retrotransposon that includes long terminal repeats (LTRs) at both ends. Its function is as follows. Integrase (IN) targets the VLP to the nucleus, where a subparticle preintegration complex (PIC) containing at least integrase and the newly synthesized dsDNA copy of the retrotransposon must transit the nuclear membrane. Once in the nucleus, integrase performs the integration of the dsDNA into the host genome. The polypeptide is Transposon Ty1-NL2 Gag-Pol polyprotein (TY1B-NL2) (Saccharomyces cerevisiae (strain ATCC 204508 / S288c) (Baker's yeast)).